We begin with the raw amino-acid sequence, 229 residues long: tRNA (guanine-N(7)-)-methyltransferase (229 aa).

S-adenosyl-L-methionine is bound by residues glutamate 62, glutamate 87, aspartate 114, and aspartate 137. The active site involves aspartate 137. Residue lysine 141 coordinates substrate. Positions 143–148 (KHNKRR) are interaction with RNA. Substrate contacts are provided by residues aspartate 173 and 208 to 211 (TKFE).

This sequence belongs to the class I-like SAM-binding methyltransferase superfamily. TrmB family.

It carries out the reaction guanosine(46) in tRNA + S-adenosyl-L-methionine = N(7)-methylguanosine(46) in tRNA + S-adenosyl-L-homocysteine. Its pathway is tRNA modification; N(7)-methylguanine-tRNA biosynthesis. Its function is as follows. Catalyzes the formation of N(7)-methylguanine at position 46 (m7G46) in tRNA. This Francisella tularensis subsp. novicida (strain U112) protein is tRNA (guanine-N(7)-)-methyltransferase.